The primary structure comprises 43 residues: Delta-actitoxin-Bca1a (43 aa).

3 disulfides stabilise this stretch: Cys-1–Cys-41, Cys-3–Cys-31, and Cys-24–Cys-42.

The protein localises to the secreted. The protein resides in the nematocyst. Binds specifically to voltage-gated sodium channels (Nav), thereby delaying their inactivation during signal transduction. Thus it strongly stimulates mammalian cardiac muscle contraction. The chain is Delta-actitoxin-Bca1a from Bunodosoma capense (Knobbly sea anemone).